We begin with the raw amino-acid sequence, 196 residues long: Bcl-2-like protein 11 (196 aa).

Residues 1-68 form a disordered region; it reads MAKQPSDVNS…PLAPPASPGP (68 aa). The segment covering 34 to 43 has biased composition (polar residues); that stretch reads TSLQTESQGN. S65 is modified (phosphoserine; by MAPK). Residues S73, S83, and S90 each carry the phosphoserine modification. The segment at 90–114 is disordered; that stretch reads SGYFSFDTDRSPAPMSCDKSTQTPS. The BH3 motif lies at 146–160; sequence IAQELRRIGDEFNET.

This sequence belongs to the Bcl-2 family. Forms heterodimers with a number of antiapoptotic Bcl-2 proteins, including MCL1, BCL2, BCL2L1 isoform Bcl-X(L), BCL2A1/BFL-1, and BCL2L2/BCLW. Does not heterodimerize with proapoptotic proteins such as BAD, BOK or BAK. Identified in a complex containing BCL2L11, DYNLL1 and BCL2L1 isoform Bcl-X(L); BH3 integrity is required for BCL2L1-binding. Interacts with YWHAZ. When phosphorylated, interacts with TRIM2; this interaction is associated with ubiquitination and degradation. Interacts (via BH3) with MCL1; this interaction may sequester BCL2L11 and prevent its pro-apoptotic activity. When phosphorylated, isoform BimEL interacts with USP27X; this interaction leads to BCL2L11 deubiquitination and stabilization. Interacts with GIMAP5. Interacts with BCL2L10/BCL-B. In terms of processing, phosphorylation at Ser-65 by MAPK1/MAPK3 leads interaction with TRIM2 and ubiquitination, followed by proteasomal degradation. Deubiquitination catalyzed by USP27X stabilizes the protein. Post-translationally, ubiquitination by TRIM2 following phosphorylation by MAPK1/MAPK3 leads to proteasomal degradation. Conversely, deubiquitination catalyzed by USP27X stabilizes the protein. In terms of tissue distribution, widely expressed.

The protein localises to the membrane. It localises to the mitochondrion. Functionally, induces apoptosis and anoikis. The protein is Bcl-2-like protein 11 (Bcl2l11) of Rattus norvegicus (Rat).